A 257-amino-acid polypeptide reads, in one-letter code: tRNA (guanine-N(1)-)-methyltransferase (257 aa).

Residues G112 and 136–141 (LGDYVL) each bind S-adenosyl-L-methionine.

The protein belongs to the RNA methyltransferase TrmD family. In terms of assembly, homodimer.

Its subcellular location is the cytoplasm. The catalysed reaction is guanosine(37) in tRNA + S-adenosyl-L-methionine = N(1)-methylguanosine(37) in tRNA + S-adenosyl-L-homocysteine + H(+). Its function is as follows. Specifically methylates guanosine-37 in various tRNAs. The chain is tRNA (guanine-N(1)-)-methyltransferase from Salinispora tropica (strain ATCC BAA-916 / DSM 44818 / JCM 13857 / NBRC 105044 / CNB-440).